A 69-amino-acid polypeptide reads, in one-letter code: Atypical cationic antimicrobial peptide (69 aa).

The first 22 residues, 1 to 22 (MAFLKKSLFLVLFLGLVSLSIC), serve as a signal peptide directing secretion. A propeptide spanning residues 23 to 45 (DEEKRENEDEENQEDDEQSEMRR) is cleaved from the precursor. The disordered stretch occupies residues 25–45 (EKRENEDEENQEDDEQSEMRR). A compositionally biased stretch (acidic residues) spans 30 to 40 (EDEENQEDDEQ).

The protein belongs to the frog skin active peptide (FSAP) family. In terms of assembly, monomer and/or weakly self-associated, oligomer, and amyloid-like fibril. Can adopt a monomeric nonamphipathic alpha-helical conformation, possibly with the aid of its cationic N- and C-termini, when bound to anionic membranes. Forms stable and ordered beta-sheet aggregates in aqueous environment or when bound to anionic or zwitterionic phospholipid vesicles. Expressed by the skin glands.

It is found in the secreted. Its subcellular location is the target cell membrane. Functionally, atypical cationic antimicrobial peptide with potent activity against Gram-negative and Gram-positive bacteria. Acts by inducing permeabilization of bacterial membrane. In vitro, also shows chemoattractant activity, which is mediated through a G protein-coupled receptor (probably FPR2 coupled to the ERK1/2 MAPK kinase pathway). Has slow-kinetic self-association and amyloid-like properties that modulate its activity. The soluble, weakly self-associated forms act on leukocytes to promote chemotaxis but have low antibacterial activity, the oligomers exhibit potent antimicrobial activity, whereas the amyloid-like fibrils have a very weak antibacterial activity. The membrane composition has a great influence on the peptide behavior. The peptide induces membrane leakage and insertion to a lesser extent in model membranes of the anionic lipid phosphatidylglycerol (PG) than in the model membranes of the zwitterionic lipid phosphatidylcholine (PC) vesicles. It forms more fibrils in PC than in PG. Membrane perturbations are more observed in the presence of PG than in the presence of PC. The peptide shows low hemolytic activity. This chain is Atypical cationic antimicrobial peptide, found in Phyllomedusa sauvagei (Sauvage's leaf frog).